A 433-amino-acid polypeptide reads, in one-letter code: B3 domain-containing protein Os04g0676600 (433 aa).

2 disordered regions span residues 1-29 and 216-283; these read MADTRGSTSSGGGDDRGREGHDDFTGGGQ and FPPV…NSAN. Over residues 13–24 the composition is skewed to basic and acidic residues; sequence GDDRGREGHDDF. Positions 216–229 are enriched in low complexity; that stretch reads FPPVSSSSRSFSSA. The segment covering 237–265 has biased composition (basic and acidic residues); sequence DAKKAKKSDIKDQPIVLRRSDTESEKNDE. Residues 269 to 283 show a composition bias toward polar residues; that stretch reads TPASEPSSMSHNSAN. The segment at residues 297–399 is a DNA-binding region (TF-B3); the sequence is LRKELTNSDV…KLVVRGEKAI (103 aa).

Its subcellular location is the nucleus. In terms of biological role, probable transcription regulator that binds specifically to the DNA sequence 5'-CATGC-3' of the IDE1 element found in the promoter of the barley iron deficiency-inducible gene IDS2. The chain is B3 domain-containing protein Os04g0676600 from Oryza sativa subsp. japonica (Rice).